Here is a 167-residue protein sequence, read N- to C-terminus: Inclusion membrane protein G (167 aa).

2 helical membrane passes run 37–57 (LSLF…AVLF) and 63–83 (VLPY…AVIV). 2 disordered regions span residues 97–136 (KRSP…STFG) and 148–167 (VSGA…SHSF). Residues 122-134 (ESASPQASPTSST) are compositionally biased toward low complexity. The Phosphorylation-dependent binding motif signature appears at 161-166 (RSRSHS). A Phosphoserine modification is found at serine 166.

Phosphorylated by chlamydial kinase Pnk1.

The protein localises to the secreted. It is found in the host vacuole. Its subcellular location is the host pathogen-containing vacuole. It localises to the host pathogen-containing vacuole membrane. Functionally, inclusion membrane protein probably involved in early modification events of the chlamydial inclusion. Binds to the host cell 14-3-3 beta (YWHAB); phosphorylation of Ser-166 is probably required. In Chlamydia trachomatis serovar D (strain ATCC VR-885 / DSM 19411 / UW-3/Cx), this protein is Inclusion membrane protein G (incG).